Here is a 386-residue protein sequence, read N- to C-terminus: Centrosomal protein of 44 kDa (386 aa).

Residues 11–194 are binds with microtubules and centrioles; the sequence is RKLEQVLRSL…GVPEGTVTST (184 aa). Residues 232 to 262 adopt a coiled-coil conformation; that stretch reads ELTALQIALAECQEKLKKLTWIEKRLECLEA. Serine 329 is modified (phosphoserine). A coiled-coil region spans residues 359–382; that stretch reads SEETTMQKMERMKKMFEETAELLK.

In terms of assembly, interacts with CROCC. Interacts with POC1B; the interaction is direct and recruits POC1B to centriolar microtubules. Binds to centriolar microtubules.

The protein resides in the cytoplasm. It localises to the cytoskeleton. Its subcellular location is the microtubule organizing center. It is found in the centrosome. The protein localises to the centriole. The protein resides in the spindle pole. It localises to the midbody. Its function is as follows. Centriole-enriched microtubule-binding protein involved in centriole biogenesis. In collaboration with CEP295 and POC1B, is required for the centriole-to-centrosome conversion by ensuring the formation of bona fide centriole wall. Functions as a linker component that maintains centrosome cohesion. Associates with CROCC and regulates its stability and localization to the centrosome. The protein is Centrosomal protein of 44 kDa (Cep44) of Rattus norvegicus (Rat).